We begin with the raw amino-acid sequence, 171 residues long: Large ribosomal subunit protein uL24 (171 aa).

A large ribosomal subunit protein uL24 region spans residues 1–124 (MNIKTGDTVV…AKPAKTKAEK (124 aa)). The tract at residues 108–171 (GQTLDKAAKP…SVQKKGASGK (64 aa)) is disordered. Residues 125-171 (VEKAATSSTDKPAKVTKAAKEAKPVKAVKSQKVEKNTSVQKKGASGK) form a unknown region.

It belongs to the universal ribosomal protein uL24 family. Part of the 50S ribosomal subunit.

In terms of biological role, one of two assembly initiator proteins, it binds directly to the 5'-end of the 23S rRNA, where it nucleates assembly of the 50S subunit. Functionally, one of the proteins that surrounds the polypeptide exit tunnel on the outside of the subunit. The sequence is that of Large ribosomal subunit protein uL24 from Acholeplasma laidlawii (strain PG-8A).